Consider the following 83-residue polypeptide: Cytochrome b559 subunit alpha (83 aa).

A helical transmembrane segment spans residues 21-35 (VIHSITIPSLFIAGW). His23 is a heme binding site.

It belongs to the PsbE/PsbF family. Heterodimer of an alpha subunit and a beta subunit. PSII is composed of 1 copy each of membrane proteins PsbA, PsbB, PsbC, PsbD, PsbE, PsbF, PsbH, PsbI, PsbJ, PsbK, PsbL, PsbM, PsbT, PsbX, PsbY, PsbZ, Psb30/Ycf12, at least 3 peripheral proteins of the oxygen-evolving complex and a large number of cofactors. It forms dimeric complexes. Heme b is required as a cofactor.

It is found in the plastid. Its subcellular location is the chloroplast thylakoid membrane. In terms of biological role, this b-type cytochrome is tightly associated with the reaction center of photosystem II (PSII). PSII is a light-driven water:plastoquinone oxidoreductase that uses light energy to abstract electrons from H(2)O, generating O(2) and a proton gradient subsequently used for ATP formation. It consists of a core antenna complex that captures photons, and an electron transfer chain that converts photonic excitation into a charge separation. The polypeptide is Cytochrome b559 subunit alpha (Chlorella vulgaris (Green alga)).